Here is a 444-residue protein sequence, read N- to C-terminus: Phosphoglucosamine mutase (444 aa).

Serine 101 acts as the Phosphoserine intermediate in catalysis. Mg(2+) is bound by residues serine 101, aspartate 240, aspartate 242, and aspartate 244. Serine 101 is modified (phosphoserine).

This sequence belongs to the phosphohexose mutase family. Requires Mg(2+) as cofactor. In terms of processing, activated by phosphorylation.

It catalyses the reaction alpha-D-glucosamine 1-phosphate = D-glucosamine 6-phosphate. Catalyzes the conversion of glucosamine-6-phosphate to glucosamine-1-phosphate. This chain is Phosphoglucosamine mutase, found in Aeromonas salmonicida (strain A449).